Consider the following 414-residue polypeptide: Glucose-1-phosphate adenylyltransferase (414 aa).

Residues G164, E181–K182, and S199 contribute to the alpha-D-glucose 1-phosphate site.

This sequence belongs to the bacterial/plant glucose-1-phosphate adenylyltransferase family. Homotetramer.

It carries out the reaction alpha-D-glucose 1-phosphate + ATP + H(+) = ADP-alpha-D-glucose + diphosphate. The protein operates within glycan biosynthesis; glycogen biosynthesis. Its function is as follows. Involved in the biosynthesis of ADP-glucose, a building block required for the elongation reactions to produce glycogen. Catalyzes the reaction between ATP and alpha-D-glucose 1-phosphate (G1P) to produce pyrophosphate and ADP-Glc. This chain is Glucose-1-phosphate adenylyltransferase, found in Kocuria rhizophila (strain ATCC 9341 / DSM 348 / NBRC 103217 / DC2201).